The following is a 494-amino-acid chain: Glutamyl-tRNA(Gln) amidotransferase subunit A (494 aa).

Active-site charge relay system residues include Lys-81 and Ser-156. Ser-180 (acyl-ester intermediate) is an active-site residue.

This sequence belongs to the amidase family. GatA subfamily. In terms of assembly, heterotrimer of A, B and C subunits.

It carries out the reaction L-glutamyl-tRNA(Gln) + L-glutamine + ATP + H2O = L-glutaminyl-tRNA(Gln) + L-glutamate + ADP + phosphate + H(+). Allows the formation of correctly charged Gln-tRNA(Gln) through the transamidation of misacylated Glu-tRNA(Gln) in organisms which lack glutaminyl-tRNA synthetase. The reaction takes place in the presence of glutamine and ATP through an activated gamma-phospho-Glu-tRNA(Gln). This chain is Glutamyl-tRNA(Gln) amidotransferase subunit A, found in Mycobacterium tuberculosis (strain ATCC 25177 / H37Ra).